The following is a 237-amino-acid chain: Methylosome subunit pICln (237 aa).

The residue at position 2 (Ser-2) is an N-acetylserine. A phosphoserine mark is found at Ser-102, Ser-144, Ser-193, and Ser-195. Residue Thr-223 is modified to Phosphothreonine.

The protein belongs to the pICln (TC 1.A.47) family. In terms of assembly, component of the methylosome, a 20S complex containing at least PRMT5/SKB1, WDR77/MEP50 and CLNS1A/pICln. May mediate SNRPD1 and SNRPD3 methylation. Forms a 6S pICln-Sm complex composed of CLNS1A/pICln, SNRPD1, SNRPD2, SNRPE, SNRPF and SNRPG; ring-like structure where CLNS1A/pICln mimics additional Sm proteins and which is unable to assemble into the core snRNP. Interacts with LSM10 and LSM11.

It is found in the cytoplasm. Its subcellular location is the cytosol. The protein localises to the nucleus. It localises to the cytoskeleton. Its function is as follows. Involved in both the assembly of spliceosomal snRNPs and the methylation of Sm proteins. Chaperone that regulates the assembly of spliceosomal U1, U2, U4 and U5 small nuclear ribonucleoproteins (snRNPs), the building blocks of the spliceosome, and thereby plays an important role in the splicing of cellular pre-mRNAs. Most spliceosomal snRNPs contain a common set of Sm proteins SNRPB, SNRPD1, SNRPD2, SNRPD3, SNRPE, SNRPF and SNRPG that assemble in a heptameric protein ring on the Sm site of the small nuclear RNA to form the core snRNP (Sm core). In the cytosol, the Sm proteins SNRPD1, SNRPD2, SNRPE, SNRPF and SNRPG are trapped in an inactive 6S pICln-Sm complex by the chaperone CLNS1A that controls the assembly of the core snRNP. Dissociation by the SMN complex of CLNS1A from the trapped Sm proteins and their transfer to an SMN-Sm complex triggers the assembly of core snRNPs and their transport to the nucleus. This is Methylosome subunit pICln (CLNS1A) from Pongo abelii (Sumatran orangutan).